A 340-amino-acid chain; its full sequence is Uroporphyrinogen decarboxylase (340 aa).

Residues 21–25 (RQAGR), F40, D71, Y147, S202, and H316 each bind substrate.

The protein belongs to the uroporphyrinogen decarboxylase family. In terms of assembly, homodimer.

The protein resides in the cytoplasm. The enzyme catalyses uroporphyrinogen III + 4 H(+) = coproporphyrinogen III + 4 CO2. The protein operates within porphyrin-containing compound metabolism; protoporphyrin-IX biosynthesis; coproporphyrinogen-III from 5-aminolevulinate: step 4/4. Its function is as follows. Catalyzes the decarboxylation of four acetate groups of uroporphyrinogen-III to yield coproporphyrinogen-III. This is Uroporphyrinogen decarboxylase from Wolinella succinogenes (strain ATCC 29543 / DSM 1740 / CCUG 13145 / JCM 31913 / LMG 7466 / NCTC 11488 / FDC 602W) (Vibrio succinogenes).